The sequence spans 720 residues: Glutaryl-7-aminocephalosporanic-acid acylase (720 aa).

A signal peptide spans 1 to 29; that stretch reads MLRVLHRAASALVMATVIGLAPGVAFALA. A propeptide spans 188–198 (spacer peptide); sequence EGDPPDLADQG. The active-site Nucleophile is the serine 199. Active-site residues include histidine 221 and glutamate 653.

Belongs to the peptidase S45 family. In terms of assembly, heterodimer of a small subunit and a large subunit processed from the same precursor.

The protein localises to the periplasm. The catalysed reaction is (7R)-7-(4-carboxybutanamido)cephalosporanate + H2O = (7R)-7-aminocephalosporanate + glutarate. Catalyzes the deacylation of 7 beta-(4-carboxybutanamido)cephalosporanic acid (glutaryl-7-aminocephalosporanic acid or GL-7-ACA) to 7-aminocephalosporanic acid (7-ACA). Cannot efficiently use cephalosporin C (CPC), penicillin G, or ampicillin as substrates. The chain is Glutaryl-7-aminocephalosporanic-acid acylase from Brevundimonas diminuta (Pseudomonas diminuta).